Here is a 178-residue protein sequence, read N- to C-terminus: Oligoribonuclease (178 aa).

In terms of domain architecture, Exonuclease spans 7–168 (LIWIDLEMTG…DDIRESIAEL (162 aa)). The active site involves tyrosine 128.

Belongs to the oligoribonuclease family.

The protein localises to the cytoplasm. Its function is as follows. 3'-to-5' exoribonuclease specific for small oligoribonucleotides. This is Oligoribonuclease from Pseudomonas syringae pv. syringae (strain B728a).